Here is a 308-residue protein sequence, read N- to C-terminus: Testis-specific Y-encoded protein 3 (308 aa).

Belongs to the nucleosome assembly protein (NAP) family.

The protein resides in the cytoplasm. It localises to the nucleus. Its function is as follows. May be involved in sperm differentiation and proliferation. This Homo sapiens (Human) protein is Testis-specific Y-encoded protein 3 (TSPY3).